The chain runs to 181 residues: Probable cobalt-precorrin-6B C(15)-methyltransferase (decarboxylating) (181 aa).

S-adenosyl-L-methionine is bound by residues T16, 40 to 44, D61, and A89; that span reads GCGSG.

This sequence belongs to the methyltransferase superfamily. Archaeal-type CbiT family.

It carries out the reaction Co-precorrin-6B + S-adenosyl-L-methionine = Co-precorrin-7 + S-adenosyl-L-homocysteine + CO2. It functions in the pathway cofactor biosynthesis; adenosylcobalamin biosynthesis; cob(II)yrinate a,c-diamide from sirohydrochlorin (anaerobic route): step 8/10. Functionally, catalyzes the methylation of C-15 in cobalt-precorrin-6B followed by the decarboxylation of C-12 to form cobalt-precorrin-7. The polypeptide is Probable cobalt-precorrin-6B C(15)-methyltransferase (decarboxylating) (Methanococcus maripaludis (strain DSM 14266 / JCM 13030 / NBRC 101832 / S2 / LL)).